The sequence spans 379 residues: Succinyl-diaminopimelate desuccinylase (379 aa).

Histidine 70 serves as a coordination point for Zn(2+). Aspartate 72 is a catalytic residue. Aspartate 103 contributes to the Zn(2+) binding site. The active-site Proton acceptor is the glutamate 137. Residues glutamate 138, glutamate 166, and histidine 352 each contribute to the Zn(2+) site.

The protein belongs to the peptidase M20A family. DapE subfamily. In terms of assembly, homodimer. Zn(2+) is required as a cofactor. Co(2+) serves as cofactor.

It carries out the reaction N-succinyl-(2S,6S)-2,6-diaminopimelate + H2O = (2S,6S)-2,6-diaminopimelate + succinate. It functions in the pathway amino-acid biosynthesis; L-lysine biosynthesis via DAP pathway; LL-2,6-diaminopimelate from (S)-tetrahydrodipicolinate (succinylase route): step 3/3. Functionally, catalyzes the hydrolysis of N-succinyl-L,L-diaminopimelic acid (SDAP), forming succinate and LL-2,6-diaminopimelate (DAP), an intermediate involved in the bacterial biosynthesis of lysine and meso-diaminopimelic acid, an essential component of bacterial cell walls. The polypeptide is Succinyl-diaminopimelate desuccinylase (Burkholderia ambifaria (strain ATCC BAA-244 / DSM 16087 / CCUG 44356 / LMG 19182 / AMMD) (Burkholderia cepacia (strain AMMD))).